A 504-amino-acid chain; its full sequence is Ribosomal protein uS12 methylthiotransferase RimO (504 aa).

Residues Lys19–Arg135 form the MTTase N-terminal domain. [4Fe-4S] cluster is bound by residues Cys28, Cys64, Cys98, Cys214, Cys218, and Cys221. Residues Ala200–Lys430 enclose the Radical SAM core domain. Residues Lys433–Leu504 form the TRAM domain.

This sequence belongs to the methylthiotransferase family. RimO subfamily. [4Fe-4S] cluster serves as cofactor.

Its subcellular location is the cytoplasm. It carries out the reaction L-aspartate(89)-[ribosomal protein uS12]-hydrogen + (sulfur carrier)-SH + AH2 + 2 S-adenosyl-L-methionine = 3-methylsulfanyl-L-aspartate(89)-[ribosomal protein uS12]-hydrogen + (sulfur carrier)-H + 5'-deoxyadenosine + L-methionine + A + S-adenosyl-L-homocysteine + 2 H(+). Functionally, catalyzes the methylthiolation of an aspartic acid residue of ribosomal protein uS12. The polypeptide is Ribosomal protein uS12 methylthiotransferase RimO (Koribacter versatilis (strain Ellin345)).